A 179-amino-acid polypeptide reads, in one-letter code: ATP-dependent protease subunit HslV (179 aa).

The active site involves threonine 7. Residues glycine 162, cysteine 165, and threonine 168 each contribute to the Na(+) site.

This sequence belongs to the peptidase T1B family. HslV subfamily. A double ring-shaped homohexamer of HslV is capped on each side by a ring-shaped HslU homohexamer. The assembly of the HslU/HslV complex is dependent on binding of ATP.

The protein localises to the cytoplasm. It carries out the reaction ATP-dependent cleavage of peptide bonds with broad specificity.. With respect to regulation, allosterically activated by HslU binding. In terms of biological role, protease subunit of a proteasome-like degradation complex believed to be a general protein degrading machinery. In Saccharophagus degradans (strain 2-40 / ATCC 43961 / DSM 17024), this protein is ATP-dependent protease subunit HslV.